Consider the following 1546-residue polypeptide: Lysophospholipase NTE1 (1546 aa).

Residues 1 to 45 are Cytoplasmic-facing; that stretch reads MKDSTEALNSIAFAVDTTLSSILPSSLAPPSAPPATSSFLKSIWY. The chain crosses the membrane as a helical span at residues 46–66; sequence AFWWLWSMVVFKIMNIILLYI. The Lumenal segment spans residues 67 to 81; sequence PSKIMNALSINFEIT. Residues 82–102 form a helical membrane-spanning segment; it reads LNLSSILVALSAIITVCFLVV. Over 103-1546 the chain is Cytoplasmic; the sequence is RYKYLTGYSK…KKVLYRRNSI (1444 aa). A nucleoside 3',5'-cyclic phosphate is bound by residues 689–820 and 816–965; these read PTEF…LKKL and KLKK…VASK. Positions 1239-1403 constitute a PNPLA domain; it reads LVLGGGGSRG…LDNLPVSEMK (165 aa). A GXGXXG motif is present at residues 1243 to 1248; it reads GGGSRG. The GXSXG motif lies at 1270–1274; the sequence is GTSIG. Catalysis depends on Ser1272, which acts as the Nucleophile. Asp1390 functions as the Proton acceptor in the catalytic mechanism. Residues 1390 to 1392 carry the DGA/G motif; the sequence is DGG.

Belongs to the NTE family.

It is found in the endoplasmic reticulum membrane. It catalyses the reaction a 1-acyl-sn-glycero-3-phosphocholine + H2O = sn-glycerol 3-phosphocholine + a fatty acid + H(+). Inhibited by organophosphorus esters. Intracellular phospholipase B that catalyzes the double deacylation of phosphatidylcholine (PC) to glycerophosphocholine (GroPCho). Plays an important role in membrane lipid homeostasis. Responsible for the rapid PC turnover in response to inositol, elevated temperatures, or when choline is present in the growth medium. The chain is Lysophospholipase NTE1 (NTE1) from Scheffersomyces stipitis (strain ATCC 58785 / CBS 6054 / NBRC 10063 / NRRL Y-11545) (Yeast).